The primary structure comprises 234 residues: Large ribosomal subunit protein uL1 (234 aa).

Belongs to the universal ribosomal protein uL1 family. Part of the 50S ribosomal subunit.

Functionally, binds directly to 23S rRNA. The L1 stalk is quite mobile in the ribosome, and is involved in E site tRNA release. Its function is as follows. Protein L1 is also a translational repressor protein, it controls the translation of the L11 operon by binding to its mRNA. This Cronobacter sakazakii (strain ATCC BAA-894) (Enterobacter sakazakii) protein is Large ribosomal subunit protein uL1.